The sequence spans 137 residues: uncharacterized protein (137 aa).

Residues 75 to 91 form a helical membrane-spanning segment; it reads MFLDAMVILAVASGVSL. The segment at 93-116 is disordered; sequence PQLPGRRSHNASTPGAKKPGKDHG.

It localises to the membrane. This is an uncharacterized protein from Saccharomyces cerevisiae (strain ATCC 204508 / S288c) (Baker's yeast).